A 284-amino-acid chain; its full sequence is uncharacterized protein (284 aa).

An N-terminal signal peptide occupies residues 1–20 (MLHNIQSILQFLLFVSSVQA). The Apple domain maps to 38–121 (CFEFKKNYWI…FTVNFFRNIC (84 aa)). 3 cysteine pairs are disulfide-bonded: Cys-38/Cys-121, Cys-63/Cys-89, and Cys-67/Cys-77. Asn-256 carries an N-linked (GlcNAc...) asparagine glycan. The chain crosses the membrane as a helical span at residues 264 to 284 (SSTGLKFTTGLLIILVVFLFL).

The protein localises to the membrane. This is an uncharacterized protein from Caenorhabditis elegans.